The primary structure comprises 672 residues: F(420)H(2) dehydrogenase subunit L (672 aa).

Helical transmembrane passes span 8–28 (EFAFLIPLLPALAFAITFFFG), 37–57 (IVPILAIAASFVISFAITLGL), 79–99 (ILIDPLAAVMLSMVSFVSLLI), 136–156 (ILQLFVSWELVGLCSYLLIGF), 179–199 (VMFLTGIIVLTSDLLKVSGGF), 225–245 (ILGFEISHLTIITLLFFGGAV), 265–285 (TTVSALIHAATMVTAGVYLVA), 298–318 (LMVVAYFGGFTALFAGTMGIV), 337–357 (MMLGLGLGTAIGLEAVGISLF), 360–380 (INHAFFKALLFLCAGSVIHAV), 394–414 (VMPITAATMTIAALALAGFGI), 447–467 (YVFSILAALLTSIYIFRLIFM), 483–503 (PAIMTIPLSILAIFALAFGAL), 545–565 (LAVLWPPVIVALAGFAIAFVI), 601–621 (FSIGIVYGIIAFLTQVVDVII), and 652–672 (TALIAGVSLLIILVKLIMEVL).

It belongs to the complex I subunit 5 family. In terms of assembly, the FPO complex is composed of at least 13 different subunits. FpoA, FpoH, FpoJ, FpoK, FpoL, FpoM and FpoN proteins constitute the membrane sector of the complex.

The protein resides in the cell membrane. It catalyses the reaction methanophenazine + reduced coenzyme F420-(gamma-L-Glu)(n) = dihydromethanophenazine + oxidized coenzyme F420-(gamma-L-Glu)(n) + H(+). Component of the F(420)H(2) dehydrogenase (FPO complex) which is part of the energy-conserving F(420)H(2):heterodisulfide oxidoreductase system. The membrane-bound electron transfer system of the complex plays an important role in the metabolism of methylotrophic methanogens when the organisms grow on methanol or methylamines. Catalyzes the oxidation of methanophenazine to dihydromethanophenazine. It shuttles electrons from F(420)H(2), via FAD and iron-sulfur (Fe-S) centers, to methanophenazine (an electron carrier in the membrane). It couples the redox reaction to proton translocation (for every two electrons transferred, two hydrogen ions are translocated across the cytoplasmic membrane), and thus conserves the redox energy in a proton gradient. It also catalyzes the oxidation of F(420)H(2) with quinones such as 2,3-dimethyl-1,4-naphthoquinone, 2-methyl-1,4-naphthoquinone and tetramethyl-p-benzoquinone. The sequence is that of F(420)H(2) dehydrogenase subunit L (fpoL) from Methanosarcina mazei (strain ATCC BAA-159 / DSM 3647 / Goe1 / Go1 / JCM 11833 / OCM 88) (Methanosarcina frisia).